The sequence spans 405 residues: MDHLPMPKFGPLAGLRVVFSGIEIAGPFAGQMFAEWGAEVIWIENVAWADTIRVQPNYPQLSRRNLHALSLNIFKDEGREAFLKLMETTDIFIEASKGPAFARRGITDEVLWQHNPKLVIAHLSGFGQYGTEEYTNLPAYNTIAQAFSGYLIQNGDVDQPMPAFPYTADYFSGLTATTAALAALHKARETGKGESIDIAMYEVMLRMGQYFMMDYFNGGEMCPRMSKGKDPYYAGCGLYKCADGYIVMELVGITQIEECFKDIGLAHLLGTPEIPEGTQLIHRIECPYGPLVEEKLDAWLAAHTIAEVKERFAELNIACAKVLTVPELESNPQYVARESITQWQTMDGRTCKGPNIMPKFKNNPGQIWRGMPSHGMDTAAILKNIGYSENDIQELVSKGLAKVED.

Residues lysine 97 and arginine 104 each contribute to the CoA site. Aspartate 169 acts as the Nucleophile in catalysis.

This sequence belongs to the CoA-transferase III family. CaiB subfamily. Homodimer.

It is found in the cytoplasm. The catalysed reaction is crotonobetainyl-CoA + (R)-carnitine = crotonobetaine + (R)-carnitinyl-CoA. It carries out the reaction 4-(trimethylamino)butanoyl-CoA + (R)-carnitine = (R)-carnitinyl-CoA + 4-(trimethylamino)butanoate. It functions in the pathway amine and polyamine metabolism; carnitine metabolism. In terms of biological role, catalyzes the reversible transfer of the CoA moiety from gamma-butyrobetainyl-CoA to L-carnitine to generate L-carnitinyl-CoA and gamma-butyrobetaine. Is also able to catalyze the reversible transfer of the CoA moiety from gamma-butyrobetainyl-CoA or L-carnitinyl-CoA to crotonobetaine to generate crotonobetainyl-CoA. This Escherichia coli O157:H7 protein is L-carnitine CoA-transferase (caiB).